Here is a 236-residue protein sequence, read N- to C-terminus: Coat protein (236 aa).

The segment at 1 to 27 is disordered; sequence MTTPANTTQAVGSTKSTTTTTAGATPA. A compositionally biased stretch (low complexity) spans 7-27; it reads TTQAVGSTKSTTTTTAGATPA.

Belongs to the potexvirus capsid protein family.

The protein resides in the virion. Required for genome encapsidation. Forms ribonucleoprotein complexes along with TGB1 helicase and viral RNA. The polypeptide is Coat protein (Brassica campestris (Field mustard)).